The following is a 446-amino-acid chain: Corrinoid/iron-sulfur protein large subunit (446 aa).

The 4Fe-4S domain maps to 2-59; the sequence is PLTGLEIYKQLPKKNCGECGTPTCLAFAMNLASGKASLDSCPYVSDAAREALDAAAAP. 4 residues coordinate [4Fe-4S] cluster: C17, C20, C25, and C42. 5-methoxybenzimidazolylcob(I)amide is bound by residues T340, T346, 370 to 373, and A433; that span reads GLSV.

In terms of assembly, heterohexamer composed of 2 subunits of AcsC, 2 subunits of AcsD and 2 subunits of AcsE. [4Fe-4S] cluster is required as a cofactor.

Acts as a methyl group carrier in the anaerobic acetyl-CoA pathway (Wood-Ljungdahl pathway) of carbon monoxide and carbon dioxide fixation. Binds the corrinoid 5-methoxybenzimidazolylcobamide which is then methylated by the AcsE subunit. The protein is Corrinoid/iron-sulfur protein large subunit (acsC) of Moorella thermoacetica (Clostridium thermoaceticum).